Consider the following 311-residue polypeptide: Methionyl-tRNA formyltransferase (311 aa).

110-113 (SLLP) contributes to the (6S)-5,6,7,8-tetrahydrofolate binding site.

The protein belongs to the Fmt family.

The enzyme catalyses L-methionyl-tRNA(fMet) + (6R)-10-formyltetrahydrofolate = N-formyl-L-methionyl-tRNA(fMet) + (6S)-5,6,7,8-tetrahydrofolate + H(+). Its function is as follows. Attaches a formyl group to the free amino group of methionyl-tRNA(fMet). The formyl group appears to play a dual role in the initiator identity of N-formylmethionyl-tRNA by promoting its recognition by IF2 and preventing the misappropriation of this tRNA by the elongation apparatus. The protein is Methionyl-tRNA formyltransferase of Streptococcus pneumoniae serotype 19F (strain G54).